Reading from the N-terminus, the 330-residue chain is Aspartate--ammonia ligase (330 aa).

Belongs to the class-II aminoacyl-tRNA synthetase family. AsnA subfamily.

It is found in the cytoplasm. It carries out the reaction L-aspartate + NH4(+) + ATP = L-asparagine + AMP + diphosphate + H(+). The protein operates within amino-acid biosynthesis; L-asparagine biosynthesis; L-asparagine from L-aspartate (ammonia route): step 1/1. This chain is Aspartate--ammonia ligase, found in Streptococcus agalactiae serotype III (strain NEM316).